A 146-amino-acid chain; its full sequence is Ecotin-like protein 1 (146 aa).

It belongs to the protease inhibitor I11 (ecotin) family.

The polypeptide is Ecotin-like protein 1 (ISP1) (Leishmania major).